The following is a 478-amino-acid chain: ATP synthase subunit beta (478 aa).

Position 160–167 (Gly160–Thr167) interacts with ATP.

This sequence belongs to the ATPase alpha/beta chains family. As to quaternary structure, F-type ATPases have 2 components, CF(1) - the catalytic core - and CF(0) - the membrane proton channel. CF(1) has five subunits: alpha(3), beta(3), gamma(1), delta(1), epsilon(1). CF(0) has three main subunits: a(1), b(2) and c(9-12). The alpha and beta chains form an alternating ring which encloses part of the gamma chain. CF(1) is attached to CF(0) by a central stalk formed by the gamma and epsilon chains, while a peripheral stalk is formed by the delta and b chains.

It is found in the cell inner membrane. It carries out the reaction ATP + H2O + 4 H(+)(in) = ADP + phosphate + 5 H(+)(out). Functionally, produces ATP from ADP in the presence of a proton gradient across the membrane. The catalytic sites are hosted primarily by the beta subunits. The chain is ATP synthase subunit beta from Orientia tsutsugamushi (strain Ikeda) (Rickettsia tsutsugamushi).